The sequence spans 425 residues: Isocitrate dehydrogenase [NADP] (425 aa).

Thr-114 is a binding site for NADP(+). 5 residues coordinate D-threo-isocitrate: Ser-123, Asn-125, Arg-129, Arg-139, and Arg-162. Residue Asp-316 coordinates Mg(2+). NADP(+)-binding positions include 348-354 (HGTAPKY), Asn-361, Tyr-400, and Arg-404.

This sequence belongs to the isocitrate and isopropylmalate dehydrogenases family. Homodimer. Mg(2+) is required as a cofactor. Requires Mn(2+) as cofactor.

It carries out the reaction D-threo-isocitrate + NADP(+) = 2-oxoglutarate + CO2 + NADPH. In terms of biological role, catalyzes the oxidative decarboxylation of isocitrate to 2-oxoglutarate and carbon dioxide with the concomitant reduction of NADP(+). The protein is Isocitrate dehydrogenase [NADP] (icd) of Helicobacter pylori (strain ATCC 700392 / 26695) (Campylobacter pylori).